Reading from the N-terminus, the 320-residue chain is Cytochrome c biogenesis protein CcsA (320 aa).

8 consecutive transmembrane segments (helical) span residues 15-35, 43-63, 71-91, 98-118, 143-163, 224-244, 251-271, and 285-305; these read FSIV…DEII, KGMI…WIYS, LYES…VPYF, LSTI…SGLL, MILS…LLVI, VISL…VWAN, WNWD…AIYL, and AIVA…VNLL.

It belongs to the CcmF/CycK/Ccl1/NrfE/CcsA family. As to quaternary structure, may interact with Ccs1.

The protein localises to the plastid. It is found in the chloroplast thylakoid membrane. Its function is as follows. Required during biogenesis of c-type cytochromes (cytochrome c6 and cytochrome f) at the step of heme attachment. This chain is Cytochrome c biogenesis protein CcsA, found in Panax ginseng (Korean ginseng).